Reading from the N-terminus, the 418-residue chain is AP-1 complex subunit mu (418 aa).

Residues 176–417 (NNEAYFDVTE…VTKAGKFQVR (242 aa)) enclose the MHD domain.

This sequence belongs to the adaptor complexes medium subunit family. In terms of assembly, adaptor protein complex 1 (AP-1) is a heterotetramer composed of two large adaptins (gamma- and beta'-type subunits), a medium adaptin (mu-type subunit AP47) and a small adaptin (sigma-type subunit AP19). Post-translationally, regulated by phosphorylation.

The protein resides in the golgi apparatus. It is found in the cytoplasmic vesicle. It localises to the clathrin-coated vesicle membrane. Functionally, component of the adapter complexes which link clathrin to receptors in coated vesicles. Clathrin-associated protein complexes are believed to interact with the cytoplasmic tails of membrane proteins, leading to their selection and concentration. AP47 is a subunit of the plasma membrane adapter. This chain is AP-1 complex subunit mu, found in Diplobatis ommata (Ocellated electric ray).